A 366-amino-acid chain; its full sequence is Chorismate synthase (366 aa).

Residues R48 and R54 each coordinate NADP(+). FMN is bound by residues 125–127 (RSS), 238–239 (NA), G278, 293–297 (KPTSS), and R319.

Belongs to the chorismate synthase family. Homotetramer. The cofactor is FMNH2.

The catalysed reaction is 5-O-(1-carboxyvinyl)-3-phosphoshikimate = chorismate + phosphate. The protein operates within metabolic intermediate biosynthesis; chorismate biosynthesis; chorismate from D-erythrose 4-phosphate and phosphoenolpyruvate: step 7/7. Functionally, catalyzes the anti-1,4-elimination of the C-3 phosphate and the C-6 proR hydrogen from 5-enolpyruvylshikimate-3-phosphate (EPSP) to yield chorismate, which is the branch point compound that serves as the starting substrate for the three terminal pathways of aromatic amino acid biosynthesis. This reaction introduces a second double bond into the aromatic ring system. The chain is Chorismate synthase from Herminiimonas arsenicoxydans.